The following is a 262-amino-acid chain: Ribosome maturation factor RimP (262 aa).

The segment at 197 to 262 is disordered; it reads RELGVLPPPP…LGQTDPTEGD (66 aa). Residues 223–233 are compositionally biased toward basic residues; it reads KLPKAKLKAAK. Basic and acidic residues predominate over residues 240 to 254; sequence TKEHRLAAAERKRLG.

This sequence belongs to the RimP family.

It is found in the cytoplasm. Required for maturation of 30S ribosomal subunits. The protein is Ribosome maturation factor RimP of Rhodopseudomonas palustris (strain BisB18).